Reading from the N-terminus, the 493-residue chain is Cardiolipin synthase 1 (493 aa).

Transmembrane regions (helical) follow at residues 13 to 33 (FTIILAIGFIINLVLAFIIIF) and 45 to 65 (WAWLFVLFVLPLIGFILYLFF). PLD phosphodiesterase domains follow at residues 228 to 255 (MNNRNHRKIIVIDGQLGYVGGFNIGDEY) and 406 to 433 (ENGFIHSKMCLIDDEIVSVGTANMDFRS). Active-site residues include His233, Lys235, Asp240, His411, Lys413, and Asp418.

Belongs to the phospholipase D family. Cardiolipin synthase subfamily.

The protein resides in the cell membrane. It catalyses the reaction 2 a 1,2-diacyl-sn-glycero-3-phospho-(1'-sn-glycerol) = a cardiolipin + glycerol. Catalyzes the reversible phosphatidyl group transfer from one phosphatidylglycerol molecule to another to form cardiolipin (CL) (diphosphatidylglycerol) and glycerol. The chain is Cardiolipin synthase 1 (cls1) from Staphylococcus aureus (strain COL).